The following is a 366-amino-acid chain: 3-dehydroquinate synthase (366 aa).

NAD(+)-binding positions include 73-78 (DGERAK), 107-111 (GVVGD), 131-132 (TT), Lys144, and Lys153. Residues Glu186, His249, and His266 each coordinate Zn(2+).

The protein belongs to the sugar phosphate cyclases superfamily. Dehydroquinate synthase family. Requires Co(2+) as cofactor. It depends on Zn(2+) as a cofactor. NAD(+) is required as a cofactor.

It is found in the cytoplasm. It catalyses the reaction 7-phospho-2-dehydro-3-deoxy-D-arabino-heptonate = 3-dehydroquinate + phosphate. The protein operates within metabolic intermediate biosynthesis; chorismate biosynthesis; chorismate from D-erythrose 4-phosphate and phosphoenolpyruvate: step 2/7. In terms of biological role, catalyzes the conversion of 3-deoxy-D-arabino-heptulosonate 7-phosphate (DAHP) to dehydroquinate (DHQ). The protein is 3-dehydroquinate synthase of Koribacter versatilis (strain Ellin345).